The sequence spans 505 residues: Maturase K (505 aa).

Belongs to the intron maturase 2 family. MatK subfamily.

It localises to the plastid. It is found in the chloroplast. Its function is as follows. Usually encoded in the trnK tRNA gene intron. Probably assists in splicing its own and other chloroplast group II introns. The protein is Maturase K of Kunzea ericoides (White teatree).